Here is a 108-residue protein sequence, read N- to C-terminus: MAPLRKTYVLKLYVAGNTPNSVRALKTLNNILEKEFKGVYALKVIDVLKNPQLAEEDKILATPTLAKVLPPPVRRIIGDLSNREKVLIGLDLLYEEIGDQAEDDLGLE.

This sequence belongs to the KaiB family. In terms of assembly, undergoes a major conformational rearrangment; in the free state forms homotetramers with 2 dimers. When bound to the CI domain of KaiC, KaiA or CikA switches to a monomeric thioredoxin-fold (KaiB(fs)). The KaiABC complex composition changes during the circadian cycle to control KaiC phosphorylation. Complexes KaiC(6), KaiA(2-4):KaiC(6), KaiB(6):KaiC(6) and KaiC(6):KaiB(6):KaiA(12) are among the most important forms, many form cooperatively. Binds to KaiA; 1 KaiB(fs) binds to the KaiA homodimer. Binds to the B-loop in the CI domain of KaiC; SasA and KaiB compete to bind to the CI domain. Binding to KaiC CI domain occurs 1:1. KaiA and CikA bind to the same region of KaiB(fs) and therefore compete.

Functionally, key component of the KaiABC oscillator complex, which constitutes the main circadian regulator in cyanobacteria. Its composition changes during the circadian cycle to control KaiC phosphorylation. KaiA stimulates KaiC autophosphorylation, while KaiB sequesters KaiA, leading to KaiC autodephosphorylation. KaiA binding to KaiC yields KaiA(2-4):KaiC(6) complexes which stimulate KaiC autophosphorylation. Phospho-Ser-431 KaiC accumulation triggers binding of KaiB to form the KaiB(6):KaiC(6) complex, leading to changes in the output regulators CikA and SasA. KaiB switches to a thioredoxin-like fold (KaiB(fs)) in complex with KaiC. KaiB(6):KaiC(6) formation exposes a site for KaiA binding that sequesters KaiA from the CII domain, making the KaiC(6):KaiB(6):KaiA(12) complex that results in KaiC autodephosphorylation. Complete dephosphorylation of KaiC leads to dissociation of KaiA(2):KaiB(1), completing 1 cycle of the Kai oscillator. A metamorphic protein which reversibly switches between an inactive tetrameric fold and a rare, thioredoxin-like monomeric fold (KaiB(fs)). KaiB(fs) binds phospho-KaiC, KaiA and CikA. KaiA and CikA compete for binding to KaiB(fs), and KaiB(fs) and SasA compete for binding to KaiC, thus the clock oscillator and output signal pathway are tightly coupled. This Thermosynechococcus vestitus (strain NIES-2133 / IAM M-273 / BP-1) protein is Circadian clock oscillator protein KaiB.